The sequence spans 307 residues: Leucine-rich repeat-containing protein 59 (307 aa).

At methionine 1 the chain carries N-acetylmethionine. An N-acetylthreonine; in Leucine-rich repeat-containing protein 59, N-terminally processed modification is found at threonine 2. Over 2–244 the chain is Cytoplasmic; it reads TKAGSKGGNL…KPPPRKHTRS (243 aa). LRR repeat units follow at residues 10–31, 40–62, 63–84, 86–107, and 109–128; these read NLRDKLDGNELDLSLSDLNEVP, KATVLDLSCNKLSTLPSDFCGLT, HLVKLDLSKNKLQQLPADFGRL, NLQHLDLLNNRLVTLPVSFAQL, and NLKWLDLKDNPLDPVLAKVA. 2 positions are modified to phosphoserine: serine 23 and serine 25. Lysine 73 is subject to N6-succinyllysine. Lysine 135 carries the post-translational modification N6-acetyllysine. Positions 148 to 216 form a coiled coil; sequence MKAVQADQER…KASKREQEKK (69 aa). The tract at residues 150–241 is disordered; it reads AVQADQERER…RPRKPPPRKH (92 aa). The segment covering 154–221 has biased composition (basic and acidic residues); that stretch reads DQERERQRRL…EQEKKPKKEA (68 aa). The segment covering 229-241 has biased composition (basic residues); sequence SGSRPRKPPPRKH. The helical transmembrane segment at 245 to 265 threads the bilayer; that stretch reads WAVLKVLLLLLLLCVAGGLVV. At 266-307 the chain is on the lumenal side; sequence CRVTGLHQQPLCTSVNTIYDNAVQGLRHHEILQWVLQTDSQQ.

As to quaternary structure, can form homodimers. Interacts with SGO1. Interacts with FGF1.

The protein localises to the microsome membrane. It is found in the endoplasmic reticulum membrane. It localises to the nucleus envelope. Functionally, required for nuclear import of FGF1, but not that of FGF2. Might regulate nuclear import of exogenous FGF1 by facilitating interaction with the nuclear import machinery and by transporting cytosolic FGF1 to, and possibly through, the nuclear pores. In Mus musculus (Mouse), this protein is Leucine-rich repeat-containing protein 59 (Lrrc59).